The chain runs to 83 residues: MPNIKSAIKRVRTTETAEERNISKKNAMRTAVKRAKTAISTDAENKDELLRFAIKQVDKASQSNLIHSNKADRIKSKLMSANK.

Residues 1 to 21 form a disordered region; the sequence is MPNIKSAIKRVRTTETAEERN. Residues 12 to 21 show a composition bias toward basic and acidic residues; it reads RTTETAEERN.

It belongs to the bacterial ribosomal protein bS20 family.

In terms of biological role, binds directly to 16S ribosomal RNA. This Staphylococcus epidermidis (strain ATCC 35984 / DSM 28319 / BCRC 17069 / CCUG 31568 / BM 3577 / RP62A) protein is Small ribosomal subunit protein bS20.